A 756-amino-acid polypeptide reads, in one-letter code: Tubulin glycylase 3B (756 aa).

Residues 104-123 (TPLPRTVTSSPTAPEAQKRQ) are disordered. The region spanning 272-629 (LEERMAFIED…DLPKNPTAAT (358 aa)) is the TTL domain. ATP is bound by residues 440–443 (QKYI), lysine 453, and aspartate 455. Residues 709-736 (ITKKKKLSASAGSSTAASAQPSTQNLTT) are disordered. A compositionally biased stretch (low complexity) spans 716-727 (SASAGSSTAASA).

It is found in the cytoplasm. It localises to the cytoskeleton. Its subcellular location is the nucleus. Its function is as follows. Essential glycylase which modifies both tubulin and non-tubulin proteins, generating side chains of glycine on the gamma-carboxyl groups of specific glutamate residues of target proteins. Monoglycylates alpha-tubulin by adding a single glycine chain to generate monoglycine side chains, but is not involved in elongation step to generate polyglycine side chains on alpha-tubulin. Has the ability to both mono- and polyglycylate non-tubulin proteins such as up (Troponin T). Required for early steps of spermatogenesis. This Drosophila melanogaster (Fruit fly) protein is Tubulin glycylase 3B (TTLL3B).